We begin with the raw amino-acid sequence, 140 residues long: 3-hydroxyacyl-[acyl-carrier-protein] dehydratase FabZ (140 aa).

The active site involves histidine 48.

Belongs to the thioester dehydratase family. FabZ subfamily.

It localises to the cytoplasm. It catalyses the reaction a (3R)-hydroxyacyl-[ACP] = a (2E)-enoyl-[ACP] + H2O. Its function is as follows. Involved in unsaturated fatty acids biosynthesis. Catalyzes the dehydration of short chain beta-hydroxyacyl-ACPs and long chain saturated and unsaturated beta-hydroxyacyl-ACPs. The sequence is that of 3-hydroxyacyl-[acyl-carrier-protein] dehydratase FabZ from Pelotomaculum thermopropionicum (strain DSM 13744 / JCM 10971 / SI).